The primary structure comprises 224 residues: 3-dehydroquinate dehydratase (224 aa).

3-dehydroquinate contacts are provided by residues 35 to 37 (EFR) and R65. Residue H120 is the Proton donor/acceptor of the active site. K146 acts as the Schiff-base intermediate with substrate in catalysis. Residues R183, T202, and Q206 each coordinate 3-dehydroquinate.

This sequence belongs to the type-I 3-dehydroquinase family. Homodimer.

The catalysed reaction is 3-dehydroquinate = 3-dehydroshikimate + H2O. It participates in metabolic intermediate biosynthesis; chorismate biosynthesis; chorismate from D-erythrose 4-phosphate and phosphoenolpyruvate: step 3/7. Involved in the third step of the chorismate pathway, which leads to the biosynthesis of aromatic amino acids. Catalyzes the cis-dehydration of 3-dehydroquinate (DHQ) and introduces the first double bond of the aromatic ring to yield 3-dehydroshikimate. This chain is 3-dehydroquinate dehydratase, found in Methanobrevibacter smithii (strain ATCC 35061 / DSM 861 / OCM 144 / PS).